We begin with the raw amino-acid sequence, 838 residues long: Leucine--tRNA ligase (838 aa).

A 'HIGH' region motif is present at residues proline 36–histidine 46. The 'KMSKS' region motif lies at lysine 611–serine 615. Residue lysine 614 coordinates ATP.

The protein belongs to the class-I aminoacyl-tRNA synthetase family.

The protein localises to the cytoplasm. The catalysed reaction is tRNA(Leu) + L-leucine + ATP = L-leucyl-tRNA(Leu) + AMP + diphosphate. This is Leucine--tRNA ligase from Wolbachia sp. subsp. Drosophila simulans (strain wRi).